A 580-amino-acid chain; its full sequence is Benzoate--CoA ligase, peroxisomal (580 aa).

The short motif at Ser578–Leu580 is the Microbody targeting signal element.

Belongs to the ATP-dependent AMP-binding enzyme family.

It localises to the peroxisome. It catalyses the reaction benzoate + ATP + CoA = benzoyl-CoA + AMP + diphosphate. Its function is as follows. Benzoate--CoA ligase involved in benzoyloxyglucosinolate biosynthesis in seeds. Glucosinolates are secondary metabolites involved in pathogen and insect defense of cruciferous plants. This is Benzoate--CoA ligase, peroxisomal (AAE20) from Arabidopsis thaliana (Mouse-ear cress).